A 65-amino-acid chain; its full sequence is Large ribosomal subunit protein bL35 (65 aa).

The protein belongs to the bacterial ribosomal protein bL35 family.

This is Large ribosomal subunit protein bL35 from Pectobacterium atrosepticum (strain SCRI 1043 / ATCC BAA-672) (Erwinia carotovora subsp. atroseptica).